The following is a 549-amino-acid chain: MTLASIRRGYHVIKTLLQYGLDDVLPPKMTPWYFKLARNSLFWIRNKHKNKPGGERLKLAMQELGPVYIKLGQMLSTRRDLLSDEWASELAMLQDKVPPFDGALARQAIEAELKAPIESLFDDFNEIPLASASISQVHTATLKSNGKDVVLKVLRPNVETKIQADLQLMSQTAKLIEYLLGEGNRLRPAEVIEDYRVTILGELNLKLEALNAVKLRNNFLDSDALYVPYVYEEFCYPRLMVMERIYGISVSDIAALKAQGTNFKLLAERGVELFFTQVFRDNFFHADMHPGNIFISRDHPENPYYIGLDCGIMGTLSEVDKRYLAENFLAFFNRDYHRIAQLYIESGWVSEKTDLQAFEQAIKVVCEPMFNKPLDEISFGHVLLELFRTARHFDIVVQPQLVLLEKTLLYIEGLGRQLYPQLDLWQTAKPFLEQWMADQVGPKAMFKKVSTKLPYWADKLPEFPELIYDNLKLGRKLLSSQQQMLDKYLKYQQQAHKSNYLLITSAVLLICGTLLINRDATLWTPYVCLVSGIILWFVGWRSRPKNRKF.

Positions 123 to 501 (DFNEIPLASA…QQQAHKSNYL (379 aa)) constitute a Protein kinase domain. ATP-binding positions include 129–137 (LASASISQV) and Lys152. Asp287 serves as the catalytic Proton acceptor. 2 helical membrane-spanning segments follow: residues 496–516 (HKSN…TLLI) and 520–540 (ATLW…FVGW).

The protein belongs to the ABC1 family. UbiB subfamily.

Its subcellular location is the cell inner membrane. It participates in cofactor biosynthesis; ubiquinone biosynthesis [regulation]. Is probably a protein kinase regulator of UbiI activity which is involved in aerobic coenzyme Q (ubiquinone) biosynthesis. The polypeptide is Probable protein kinase UbiB (Shewanella baltica (strain OS223)).